Reading from the N-terminus, the 472-residue chain is Transcription factor TGAL1 (472 aa).

The disordered stretch occupies residues 136–190; it reads WGESTIADTSPRTDTSTDPDTDERNQMFEQGQLAAPTASDSSDRSKDKLDHKTLR. Residues 143–153 are compositionally biased toward low complexity; the sequence is DTSPRTDTSTD. Basic and acidic residues predominate over residues 176-187; that stretch reads SSDRSKDKLDHK. Positions 185–229 constitute a bZIP domain; the sequence is DHKTLRRLAQNREAARKSRLRKKAYIQNLESSRLKLTQIEQELQR. Residues 187-207 are basic motif; sequence KTLRRLAQNREAARKSRLRKK. Positions 213–227 are leucine-zipper; it reads LESSRLKLTQIEQEL. One can recognise a DOG1 domain in the interval 252 to 469; it reads ALAFDMEYAR…RALSSLWLAR (218 aa).

Belongs to the bZIP family. In terms of assembly, isoforms 1 and 2 interact with NPR2/NH2. Isoform 2 interacts with NPR1/NH1 and NPR3/NH3.

It localises to the nucleus. In terms of biological role, transcriptional regulator involved in defense response. The sequence is that of Transcription factor TGAL1 from Oryza sativa subsp. japonica (Rice).